Consider the following 379-residue polypeptide: 3-dehydroquinate synthase (379 aa).

Residues Ser67 to Lys72, Gly101 to Asp105, Thr125 to Thr126, Lys138, and Lys147 contribute to the NAD(+) site. Zn(2+)-binding residues include Glu180, His242, and His258.

Belongs to the sugar phosphate cyclases superfamily. Dehydroquinate synthase family. Requires NAD(+) as cofactor. Co(2+) is required as a cofactor. Zn(2+) serves as cofactor.

The protein localises to the cytoplasm. It catalyses the reaction 7-phospho-2-dehydro-3-deoxy-D-arabino-heptonate = 3-dehydroquinate + phosphate. Its pathway is metabolic intermediate biosynthesis; chorismate biosynthesis; chorismate from D-erythrose 4-phosphate and phosphoenolpyruvate: step 2/7. Catalyzes the conversion of 3-deoxy-D-arabino-heptulosonate 7-phosphate (DAHP) to dehydroquinate (DHQ). The polypeptide is 3-dehydroquinate synthase (Chlamydia abortus (strain DSM 27085 / S26/3) (Chlamydophila abortus)).